The chain runs to 133 residues: Ribonuclease VapC28 (133 aa).

Positions 1–124 (MIVDTSAIIA…LWKGNDFGHT (124 aa)) constitute a PINc domain. Residues Asp4 and Asp100 each contribute to the Mg(2+) site.

This sequence belongs to the PINc/VapC protein family. The cofactor is Mg(2+).

In terms of biological role, toxic component of a type II toxin-antitoxin (TA) system. An RNase. Upon expression in M.smegmatis inhibits colony formation. Its toxic effect is neutralized by coexpression with cognate antitoxin VapB28. This is Ribonuclease VapC28 from Mycobacterium tuberculosis (strain ATCC 25618 / H37Rv).